The chain runs to 78 residues: uncharacterized protein (78 aa).

A disordered region spans residues 20 to 78 (LQDLFPPHFGNEEADEDDEDGDKYGDDDGEFYGDNDGDNDGDNDGVNDGVGDGPPSTLL). The span at 31–64 (EEADEDDEDGDKYGDDDGEFYGDNDGDNDGDNDG) shows a compositional bias: acidic residues.

This is an uncharacterized protein from Dictyostelium discoideum (Social amoeba).